Consider the following 103-residue polypeptide: Large ribosomal subunit protein uL24 (103 aa).

This sequence belongs to the universal ribosomal protein uL24 family. In terms of assembly, part of the 50S ribosomal subunit.

In terms of biological role, one of two assembly initiator proteins, it binds directly to the 5'-end of the 23S rRNA, where it nucleates assembly of the 50S subunit. Functionally, one of the proteins that surrounds the polypeptide exit tunnel on the outside of the subunit. In Geobacillus sp. (strain WCH70), this protein is Large ribosomal subunit protein uL24.